The following is a 182-amino-acid chain: Large ribosomal subunit protein bL25 (182 aa).

It belongs to the bacterial ribosomal protein bL25 family. CTC subfamily. In terms of assembly, part of the 50S ribosomal subunit; part of the 5S rRNA/L5/L18/L25 subcomplex. Contacts the 5S rRNA. Binds to the 5S rRNA independently of L5 and L18.

This is one of the proteins that binds to the 5S RNA in the ribosome where it forms part of the central protuberance. This chain is Large ribosomal subunit protein bL25, found in Borrelia garinii subsp. bavariensis (strain ATCC BAA-2496 / DSM 23469 / PBi) (Borreliella bavariensis).